A 1320-amino-acid chain; its full sequence is Poly [ADP-ribose] polymerase tankyrase-1 (1320 aa).

Residues 1-15 (MAASRRSQHHHHHHQ) show a composition bias toward basic residues. Disordered stretches follow at residues 1-88 (MAAS…DGAV) and 111-152 (AGGG…AAGV). Over residues 25–46 (SAPPPPPPPPLSPGLAPGPTPA) the composition is skewed to pro residues. The segment covering 69-82 (DGSRDPPDRPRSPD) has biased composition (basic and acidic residues). Over residues 120–152 (NSASSASSPTSSSSSSPSSPGSSLAESPEAAGV) the composition is skewed to low complexity. 18 ANK repeats span residues 174 to 202 (GALRELLEACRNGDVSRVKRLVDAANVNA), 208 to 237 (RKSSPLHFAAGFGRKDVVEHLLQMGANVHA), 241 to 270 (GGLIPLHNACSFGHAEVVSLLLCQGADPNA), 274 to 303 (WNYTPLHEAAIKGKIDVCIVLLQHGADPNI), 361 to 390 (RKSTPLHLAAGYNRVRIVQLLLQHGADVHA), 394 to 423 (GGLVPLHNACSYGHYEVTELLLKHGACVNA), 427 to 456 (WQFTPLHEAASKNRVEVCSLLLSHGADPTL), 514 to 546 (SHETALHCAVASLHPKRKQVAELLLRKGANVNE), 550 to 579 (DFMTPLHVAAERAHNDVMEVLHKHGAKMNA), 583 to 612 (LGQTALHRAALAGHLQTCRLLLSYGSDPSI), 676 to 705 (RHSTPLHFAAGYNRVSVVEYLLHHGADVHA), 709 to 738 (GGLVPLHNACSYGHYEVAELLVRHGASVNV), 742 to 771 (WKFTPLHEAAAKGKYEICKLLLKHGADPTK), 775 to 803 (DGNTPLDLVKEGDTDIQDLLRGDAALLDA), 829 to 858 (RNSTPLHLAAGYNNLEVAEYLLEHGADVNA), 862 to 891 (GGLIPLHNAASYGHVDIAALLIKYNTCVNA), 895 to 924 (WAFTPLHEAAQKGRTQLCALLLAHGADPTM), and 928 to 957 (EGQTPLDLATADDIRALLIDAMPPEALPTC). One can recognise an SAM domain in the interval 1019 to 1082 (GLDMNISQFL…IKGVERLLGG (64 aa)). Residues 1105–1310 (APEDKEYQSV…YQIMKPEAPS (206 aa)) enclose the PARP catalytic domain. Zn(2+) contacts are provided by C1227, H1230, C1235, and C1238.

This sequence belongs to the ARTD/PARP family. In terms of assembly, oligomerizes and associates with TNKS2. Interacts with the cytoplasmic domain of LNPEP/Otase in SLC2A4/GLUT4-vesicles. Binds to the N-terminus of telomeric TERF1 via the ANK repeats. Found in a complex with POT1; TERF1 and TINF2. Interacts with AXIN1. Interacts with AXIN2. Interacts with BLZF1 and CASC3. Interacts with NUMA1. Phosphorylated on serine residues by MAPK kinases upon insulin stimulation. Phosphorylated during mitosis. Post-translationally, ubiquitinated by RNF146 when auto-poly-ADP-ribosylated, leading to its degradation. In terms of processing, ADP-ribosylated (-auto). Poly-ADP-ribosylated protein is recognized by RNF146, followed by ubiquitination.

The protein localises to the cytoplasm. It localises to the golgi apparatus membrane. Its subcellular location is the cytoskeleton. It is found in the microtubule organizing center. The protein resides in the centrosome. The protein localises to the nucleus. It localises to the nuclear pore complex. Its subcellular location is the chromosome. It is found in the telomere. The protein resides in the spindle pole. The catalysed reaction is NAD(+) + (ADP-D-ribosyl)n-acceptor = nicotinamide + (ADP-D-ribosyl)n+1-acceptor + H(+).. It catalyses the reaction L-aspartyl-[protein] + NAD(+) = 4-O-(ADP-D-ribosyl)-L-aspartyl-[protein] + nicotinamide. It carries out the reaction L-glutamyl-[protein] + NAD(+) = 5-O-(ADP-D-ribosyl)-L-glutamyl-[protein] + nicotinamide. Its function is as follows. Poly-ADP-ribosyltransferase involved in various processes such as Wnt signaling pathway, telomere length and vesicle trafficking. Acts as an activator of the Wnt signaling pathway by mediating poly-ADP-ribosylation (PARsylation) of AXIN1 and AXIN2, 2 key components of the beta-catenin destruction complex: poly-ADP-ribosylated target proteins are recognized by RNF146, which mediates their ubiquitination and subsequent degradation. Also mediates PARsylation of BLZF1 and CASC3, followed by recruitment of RNF146 and subsequent ubiquitination. Mediates PARsylation of TERF1, thereby contributing to the regulation of telomere length. Involved in centrosome maturation during prometaphase by mediating PARsylation of HEPACAM2/MIKI. May also regulate vesicle trafficking and modulate the subcellular distribution of SLC2A4/GLUT4-vesicles. May be involved in spindle pole assembly through PARsylation of NUMA1. Stimulates 26S proteasome activity. The sequence is that of Poly [ADP-ribose] polymerase tankyrase-1 (Tnks) from Mus musculus (Mouse).